A 146-amino-acid chain; its full sequence is Snake venom vascular endothelial growth factor toxin TfsvVEGF (146 aa).

The N-terminal stretch at 1–24 (MAAYLLAVAILFCIQGWPSGTVQG) is a signal peptide. Pyrrolidone carboxylic acid is present on Gln25. Intrachain disulfides connect Cys38-Cys80, Cys69-Cys115, and Cys73-Cys117. Over residues 118 to 139 (RPRSPGDVNNGKDKRNPEEGGP) the composition is skewed to basic and acidic residues. A disordered region spans residues 118-146 (RPRSPGDVNNGKDKRNPEEGGPRARFPFV).

It belongs to the PDGF/VEGF growth factor family. Snake venom VEGF subfamily. In terms of assembly, homodimer; disulfide-linked. Interacts with VEGF receptor-1 (FLT1) with a high affinity, whereas it binds to VEGF receptor-2 (KDR) with a low affinity. Does not bind VEGF receptor-3 (FLT4). Expressed by the venom gland.

Its subcellular location is the secreted. Snake venom VEGFs may contribute to venom dispersion and prey subjugation by inducing vascular permeability and hypotension. This protein strongly increases vascular permeability, and weakly stimulates angiogenesis. Interacts with VEGF receptor-1 (FLT1) with a high affinity, whereas it binds to VEGF receptor-2 (KDR) with a low affinity. Stimulates autophosphorylation of VEGF receptor-1 (VEGFR-1/FLT1), and VEGF receptor-2 (VEGFR-2/KDR). In Protobothrops flavoviridis (Habu), this protein is Snake venom vascular endothelial growth factor toxin TfsvVEGF.